Consider the following 61-residue polypeptide: Large ribosomal subunit protein bL28 (61 aa).

It belongs to the bacterial ribosomal protein bL28 family.

The polypeptide is Large ribosomal subunit protein bL28 (Geobacillus thermodenitrificans (strain NG80-2)).